A 590-amino-acid polypeptide reads, in one-letter code: Major surface protein MspTL (590 aa).

A signal peptide spans 1-19 (MKKILAFFLVFALAGAVFA).

It is found in the cell outer membrane. Functionally, major component of the outer membrane. This is Major surface protein MspTL (mspTL) from Treponema lecithinolyticum.